Reading from the N-terminus, the 243-residue chain is Geranylgeranylglyceryl phosphate synthase (243 aa).

Positions 29 and 58 each coordinate Mg(2+). Sn-glycerol 1-phosphate is bound by residues 178–184 (YLEAGSG), 209–210 (GG), and 231–232 (GT).

This sequence belongs to the GGGP/HepGP synthase family. Group II subfamily. As to quaternary structure, homodimer. Mg(2+) serves as cofactor.

It catalyses the reaction sn-glycerol 1-phosphate + (2E,6E,10E)-geranylgeranyl diphosphate = sn-3-O-(geranylgeranyl)glycerol 1-phosphate + diphosphate. In terms of biological role, prenyltransferase that catalyzes the transfer of the geranylgeranyl moiety of geranylgeranyl diphosphate (GGPP) to the C3 hydroxyl of sn-glycerol-1-phosphate (G1P). The protein is Geranylgeranylglyceryl phosphate synthase of Flavobacterium johnsoniae (strain ATCC 17061 / DSM 2064 / JCM 8514 / BCRC 14874 / CCUG 350202 / NBRC 14942 / NCIMB 11054 / UW101) (Cytophaga johnsonae).